Consider the following 578-residue polypeptide: Septation ring formation regulator EzrA (578 aa).

At 1–8 (MKNNWIII) the chain is on the extracellular side. Residues 9 to 27 (LVLVIVIIAAVLYLIGYFM) form a helical membrane-spanning segment. Topologically, residues 28-578 (RKKNQEQLDE…NINNPNLTAI (551 aa)) are cytoplasmic. Coiled coils occupy residues 103 to 165 (RFMK…DDKA), 256 to 285 (QNFA…AAVE), and 394 to 490 (KILD…DDLE).

This sequence belongs to the EzrA family.

Its subcellular location is the cell membrane. Its function is as follows. Negative regulator of FtsZ ring formation; modulates the frequency and position of FtsZ ring formation. Inhibits FtsZ ring formation at polar sites. Interacts either with FtsZ or with one of its binding partners to promote depolymerization. The protein is Septation ring formation regulator EzrA of Enterococcus faecalis (strain ATCC 700802 / V583).